The sequence spans 762 residues: cGMP-dependent protein kinase 2 (762 aa).

A disordered region spans residues 1-26 (MGNGSVKPKHAKHPDGHSGNLSNEAL). Residue Gly-2 is the site of N-myristoyl glycine attachment. 2 positions are modified to phosphoserine: Ser-110 and Ser-117. A disordered region spans residues 118-138 (RRGAKAGVSAEPTTRTYDLNK). A cGMP-binding, high affinity; cAMP-binding, moderate affinity region spans residues 168–283 (FLKRLDPQQI…DEEYRNFLRS (116 aa)). 3',5'-cyclic GMP is bound by residues 232–235 (GELA), 242–243 (RT), Lys-347, 356–359 (GEKA), 366–367 (RS), Asp-412, and Arg-415. Residues 286–416 (LLKNLPEDKL…TLNRDDEKRH (131 aa)) form a cGMP-binding, high affinity; cAMP-binding, low affinity region. Ser-431 bears the Phosphoserine mark. Positions 453 to 711 (LEIIATLGVG…INDIKKHRWL (259 aa)) constitute a Protein kinase domain. ATP-binding positions include 459-467 (LGVGGFGRV) and Lys-482. Asp-576 (proton acceptor) is an active-site residue. Thr-609 carries the post-translational modification Phosphothreonine. The region spanning 712 to 762 (NGFNWEGLKARSLPSPLRRELSGPIDHSYFDKYPPEKGVPPDEMSGWDKDF) is the AGC-kinase C-terminal domain. A disordered region spans residues 740–762 (YFDKYPPEKGVPPDEMSGWDKDF).

It belongs to the protein kinase superfamily. AGC Ser/Thr protein kinase family. cGMP subfamily. In terms of assembly, interacts with GRIA1/GLUR1. In terms of processing, myristoylation mediates membrane localization.

Its subcellular location is the apical cell membrane. It localises to the cell membrane. The enzyme catalyses L-seryl-[protein] + ATP = O-phospho-L-seryl-[protein] + ADP + H(+). The catalysed reaction is L-threonyl-[protein] + ATP = O-phospho-L-threonyl-[protein] + ADP + H(+). Binding of cGMP results in enzyme activation. Crucial regulator of intestinal secretion and bone growth. Phosphorylates and activates CFTR on the plasma membrane. Plays a key role in intestinal secretion by regulating cGMP-dependent translocation of CFTR in jejunum. Acts downstream of NMDAR to activate the plasma membrane accumulation of GRIA1/GLUR1 in synapse and increase synaptic plasticity. Phosphorylates GRIA1/GLUR1 at Ser-863. Acts as a regulator of gene expression and activator of the extracellular signal-regulated kinases MAPK3/ERK1 and MAPK1/ERK2 in mechanically stimulated osteoblasts. Under fluid shear stress, mediates ERK activation and subsequent induction of FOS, FOSL1/FRA1, FOSL2/FRA2 and FOSB that play a key role in the osteoblast anabolic response to mechanical stimulation. The sequence is that of cGMP-dependent protein kinase 2 (Prkg2) from Mus musculus (Mouse).